Here is a 1375-residue protein sequence, read N- to C-terminus: DNA-directed RNA polymerase subunit beta (1375 aa).

This sequence belongs to the RNA polymerase beta chain family. In terms of assembly, the RNAP catalytic core consists of 2 alpha, 1 beta, 1 beta' and 1 omega subunit. When a sigma factor is associated with the core the holoenzyme is formed, which can initiate transcription.

It carries out the reaction RNA(n) + a ribonucleoside 5'-triphosphate = RNA(n+1) + diphosphate. Its function is as follows. DNA-dependent RNA polymerase catalyzes the transcription of DNA into RNA using the four ribonucleoside triphosphates as substrates. The sequence is that of DNA-directed RNA polymerase subunit beta from Methylorubrum populi (strain ATCC BAA-705 / NCIMB 13946 / BJ001) (Methylobacterium populi).